Here is a 356-residue protein sequence, read N- to C-terminus: Glutamate 5-kinase (356 aa).

ATP is bound at residue Lys-6. Substrate is bound by residues Ser-46, Asp-135, and Asn-147. 202 to 208 serves as a coordination point for ATP; that stretch reads TGGMRSK. The PUA domain maps to 265–342; that stretch reads KGIIVVDRGA…SEVRKLLNTT (78 aa).

The protein belongs to the glutamate 5-kinase family.

The protein resides in the cytoplasm. The catalysed reaction is L-glutamate + ATP = L-glutamyl 5-phosphate + ADP. Its pathway is amino-acid biosynthesis; L-proline biosynthesis; L-glutamate 5-semialdehyde from L-glutamate: step 1/2. Its function is as follows. Catalyzes the transfer of a phosphate group to glutamate to form L-glutamate 5-phosphate. This is Glutamate 5-kinase from Aquifex aeolicus (strain VF5).